The chain runs to 158 residues: Methylglyoxal synthase (158 aa).

Positions 1–158 (MRRKLRIALV…AFEESLKVKE (158 aa)) constitute an MGS-like domain. Residues His-12, Lys-16, 38–41 (TGTT), and 63–64 (SG) contribute to the substrate site. Asp-69 (proton donor/acceptor) is an active-site residue. His-96 is a substrate binding site.

It belongs to the methylglyoxal synthase family.

It catalyses the reaction dihydroxyacetone phosphate = methylglyoxal + phosphate. Functionally, catalyzes the formation of methylglyoxal from dihydroxyacetone phosphate. The chain is Methylglyoxal synthase from Treponema socranskii.